Reading from the N-terminus, the 252-residue chain is Small ribosomal subunit protein uS3 (252 aa).

The region spanning 39 to 109 (IRNYVNTRLK…EVKIDVVEVV (71 aa)) is the KH type-2 domain. The span at 222–240 (MKKIRDRRNDQRSRGGRDS) shows a compositional bias: basic and acidic residues. Positions 222–252 (MKKIRDRRNDQRSRGGRDSRNKRRRRPKNTA) are disordered. Residues 241-252 (RNKRRRRPKNTA) are compositionally biased toward basic residues.

This sequence belongs to the universal ribosomal protein uS3 family. Part of the 30S ribosomal subunit. Forms a tight complex with proteins S10 and S14.

Functionally, binds the lower part of the 30S subunit head. Binds mRNA in the 70S ribosome, positioning it for translation. The sequence is that of Small ribosomal subunit protein uS3 from Chlorobium phaeobacteroides (strain BS1).